The sequence spans 272 residues: 2-dehydro-3-deoxyphosphooctonate aldolase (272 aa).

Belongs to the KdsA family.

It is found in the cytoplasm. The catalysed reaction is D-arabinose 5-phosphate + phosphoenolpyruvate + H2O = 3-deoxy-alpha-D-manno-2-octulosonate-8-phosphate + phosphate. It participates in carbohydrate biosynthesis; 3-deoxy-D-manno-octulosonate biosynthesis; 3-deoxy-D-manno-octulosonate from D-ribulose 5-phosphate: step 2/3. It functions in the pathway bacterial outer membrane biogenesis; lipopolysaccharide biosynthesis. This Pelobacter propionicus (strain DSM 2379 / NBRC 103807 / OttBd1) protein is 2-dehydro-3-deoxyphosphooctonate aldolase.